The sequence spans 425 residues: Serine--tRNA ligase 2 (425 aa).

234 to 236 (TAE) is an L-serine binding site. 265-267 (RVE) is an ATP binding site. Glu-288 is a binding site for L-serine. Position 352–355 (352–355 (EVSS)) interacts with ATP. L-serine is bound at residue Ser-388.

The protein belongs to the class-II aminoacyl-tRNA synthetase family. Type-1 seryl-tRNA synthetase subfamily. As to quaternary structure, homodimer. The tRNA molecule binds across the dimer.

It is found in the cytoplasm. It carries out the reaction tRNA(Ser) + L-serine + ATP = L-seryl-tRNA(Ser) + AMP + diphosphate + H(+). It catalyses the reaction tRNA(Sec) + L-serine + ATP = L-seryl-tRNA(Sec) + AMP + diphosphate + H(+). Its pathway is aminoacyl-tRNA biosynthesis; selenocysteinyl-tRNA(Sec) biosynthesis; L-seryl-tRNA(Sec) from L-serine and tRNA(Sec): step 1/1. In terms of biological role, catalyzes the attachment of serine to tRNA(Ser). Is also able to aminoacylate tRNA(Sec) with serine, to form the misacylated tRNA L-seryl-tRNA(Sec), which will be further converted into selenocysteinyl-tRNA(Sec). This is Serine--tRNA ligase 2 from Clostridium acetobutylicum (strain ATCC 824 / DSM 792 / JCM 1419 / IAM 19013 / LMG 5710 / NBRC 13948 / NRRL B-527 / VKM B-1787 / 2291 / W).